The primary structure comprises 300 residues: E3 ubiquitin-protein ligase RNF212B (300 aa).

The RING-type zinc-finger motif lies at 6–40 (CNQCFRKDGAHFFVTSCGHIFCKKCVTLEKCAVCG). Residues 88–124 (LIAFYKHRITKLETAMQETQQALVSQDKELSVLRKEN) are a coiled coil. 2 disordered regions span residues 141–251 (YQGS…HTRV) and 280–300 (PYQQQRQMGLPSGREAWTTSR). Residues 155–169 (TSPSQSVTPRPSFQH) show a composition bias toward polar residues. Residues 170-183 (SSQVVSRSSSVESV) show a composition bias toward low complexity. Residues 191–200 (GSLGQGGRGL) are compositionally biased toward gly residues. Over residues 211–234 (NETPSPASTHSLSYRPSSASSGQG) the composition is skewed to polar residues.

As to quaternary structure, homodimer. In terms of processing, autoubiquitinated.

The protein resides in the chromosome. It catalyses the reaction S-ubiquitinyl-[E2 ubiquitin-conjugating enzyme]-L-cysteine + [acceptor protein]-L-lysine = [E2 ubiquitin-conjugating enzyme]-L-cysteine + N(6)-ubiquitinyl-[acceptor protein]-L-lysine.. It functions in the pathway protein modification; protein ubiquitination. Its function is as follows. Ubiquitin E3 ligase that acts as a crucial factor for crossing-over (CO) formation during meiosis. Essential for normal prophase I progression and for ensuring appropriate CO designation in meiosis. Recruits key components of the cross-over machinery either directly ou indirectly, leading to the activation of the MutL-gamma complex. The function of RNF212B in CO designation is dependent on its catalytic activity. This is E3 ubiquitin-protein ligase RNF212B (RNF212B) from Pongo abelii (Sumatran orangutan).